The primary structure comprises 285 residues: Acetylglutamate kinase (285 aa).

Substrate is bound by residues 64–65 (GG), arginine 86, and asparagine 179.

It belongs to the acetylglutamate kinase family. ArgB subfamily.

It localises to the plastid. The protein resides in the chloroplast. It catalyses the reaction N-acetyl-L-glutamate + ATP = N-acetyl-L-glutamyl 5-phosphate + ADP. The protein operates within amino-acid biosynthesis; L-arginine biosynthesis; N(2)-acetyl-L-ornithine from L-glutamate: step 2/4. Functionally, catalyzes the ATP-dependent phosphorylation of N-acetyl-L-glutamate. The protein is Acetylglutamate kinase of Pyropia yezoensis (Susabi-nori).